The sequence spans 104 residues: Matrix Gla protein (104 aa).

The signal sequence occupies residues 1–19 (MKSLLPLAILAALAVATLC). Residue E21 is modified to 4-carboxyglutamate. Phosphoserine occurs at positions 22, 25, and 28. The region spanning 51 to 97 (RAKAQKRVQERNKPAYEINREACDDYKLCERYAMVYGYNAAYNRYFR) is the Gla domain. E60, E67, and E71 each carry 4-carboxyglutamate. C73 and C79 are oxidised to a cystine.

It belongs to the osteocalcin/matrix Gla protein family. Requires vitamin K-dependent gamma-carboxylation for its function.

The protein resides in the secreted. In terms of biological role, associates with the organic matrix of bone and cartilage. Thought to act as an inhibitor of bone formation. The protein is Matrix Gla protein (Mgp) of Mus musculus (Mouse).